The following is a 1679-amino-acid chain: Lysophospholipase NTE1 (1679 aa).

Over residues 1-20 the composition is skewed to low complexity; that stretch reads MRSMNCTTNNTNNTGQNTKN. Positions 1–21 are disordered; it reads MRSMNCTTNNTNNTGQNTKNS. Over 1–49 the chain is Cytoplasmic; it reads MRSMNCTTNNTNNTGQNTKNSLGSSFNSSNYTSYRFQTCLTDQIISEAQ. A helical membrane pass occupies residues 50–70; it reads TWSLSSLFNFSWVVSYFVMGA. Residues 71-103 are Lumenal-facing; the sequence is SRMIFRYGWYLATLSLLRIPKWIFFKLHHVQFT. A helical transmembrane segment spans residues 104–124; the sequence is LSFWLILFALAVIVFVTYTIM. Residues 125–1679 are Cytoplasmic-facing; that stretch reads KERILSQYKR…EFLLHRRNSI (1555 aa). The segment covering 261-274 has biased composition (basic and acidic residues); it reads SDKDHGDETDHSDT. A disordered region spans residues 261 to 304; the sequence is SDKDHGDETDHSDTDGLDDQDRDEEDEEEDDDIDNYDTKSCSSN. The segment covering 275 to 295 has biased composition (acidic residues); the sequence is DGLDDQDRDEEDEEEDDDIDN. Phosphoserine is present on residues Ser300 and Ser312. Disordered stretches follow at residues 498-527 and 586-672; these read SSGS…KPSD and DILS…VSPR. 2 stretches are compositionally biased toward polar residues: residues 592–606 and 630–652; these read PIHN…GINT and FSSL…LDNT. 7 positions are modified to phosphoserine: Ser632, Ser634, Ser653, Ser661, Ser670, Ser680, and Ser739. The disordered stretch occupies residues 775 to 800; sequence KEYTISNKRHNKSKSQDKKKPRAYKE. Over residues 788–800 the composition is skewed to basic and acidic residues; the sequence is KSQDKKKPRAYKE. Thr803 bears the Phosphothreonine mark. Residues 803–947 and 943–1074 each bind a nucleoside 3',5'-cyclic phosphate; these read TPNL…LTKL and SLTK…VAKK. The tract at residues 855-882 is disordered; sequence SSSVVSSMSKPEQVSAQSSHKGENPHHT. Over residues 862–873 the composition is skewed to polar residues; that stretch reads MSKPEQVSAQSS. Positions 1373 to 1537 constitute a PNPLA domain; the sequence is LVLGGGGARG…VDNLPVTEMR (165 aa). Positions 1377–1382 match the GXGXXG motif; sequence GGGARG. The short motif at 1404–1408 is the GXSXG element; that stretch reads GTSIG. The active-site Nucleophile is Ser1406. Asp1524 acts as the Proton acceptor in catalysis. A DGA/G motif is present at residues 1524–1526; it reads DGG.

This sequence belongs to the NTE family.

It is found in the endoplasmic reticulum membrane. Its subcellular location is the lipid droplet. It carries out the reaction a 1-acyl-sn-glycero-3-phosphocholine + H2O = sn-glycerol 3-phosphocholine + a fatty acid + H(+). The catalysed reaction is a 1,2-diacyl-sn-glycero-3-phosphocholine + 2 H2O = sn-glycerol 3-phosphocholine + 2 a carboxylate + 2 H(+). With respect to regulation, positively regulated by SEC14. Inhibited by organophosphorus esters in the order phenyl saligenin phosphate (PSP) &gt; phenyldipentyl phosphinate (PDPP) = diisopropyl fluorophosphate (DFP) &gt; and paraoxon (PXN). In terms of biological role, intracellular phospholipase B that catalyzes the double deacylation of phosphatidylcholine (PC) to glycerophosphocholine (GroPCho). Plays an important role in membrane lipid homeostasis. Responsible for the rapid PC turnover in response to inositol, elevated temperatures, or when choline is present in the growth medium. NTE1 activity impacts the repressing transcriptional activity of OPI1, the main regulator of phospholipid synthesis gene transcription. The chain is Lysophospholipase NTE1 (NTE1) from Saccharomyces cerevisiae (strain ATCC 204508 / S288c) (Baker's yeast).